We begin with the raw amino-acid sequence, 739 residues long: Eukaryotic translation initiation factor 3 subunit B (739 aa).

Residues 1 to 98 (MSINEEDYLQ…LFIQFKSTES (98 aa)) form a sufficient for interaction with HCR1 and TIF32 region. Residues 1–224 (MSINEEDYLQ…GIQSWGGANF (224 aa)) form a sufficient for interaction with PIC8 region. One can recognise an RRM domain in the interval 37 to 124 (NYIIVDGAPI…HRLLVNKLSD (88 aa)). WD repeat units follow at residues 190 to 229 (PRKG…SIKR), 231 to 293 (FHQQ…RTFA), 301 to 339 (QKEM…QLLD), 343 to 385 (VKVD…QTAR), 453 to 502 (ELKD…KGGV), 537 to 579 (IENK…ETNK), and 592 to 630 (DKFS…YEFT).

The protein belongs to the eIF-3 subunit B family. In terms of assembly, component of the eukaryotic translation initiation factor 3 (eIF-3) complex.

Its subcellular location is the cytoplasm. Functionally, RNA-binding component of the eukaryotic translation initiation factor 3 (eIF-3) complex, which is involved in protein synthesis of a specialized repertoire of mRNAs and, together with other initiation factors, stimulates binding of mRNA and methionyl-tRNAi to the 40S ribosome. The eIF-3 complex specifically targets and initiates translation of a subset of mRNAs involved in cell proliferation. The polypeptide is Eukaryotic translation initiation factor 3 subunit B (Candida albicans (strain SC5314 / ATCC MYA-2876) (Yeast)).